The sequence spans 149 residues: UPF0260 protein PSPPH_1551 (149 aa).

The protein belongs to the UPF0260 family.

This Pseudomonas savastanoi pv. phaseolicola (strain 1448A / Race 6) (Pseudomonas syringae pv. phaseolicola (strain 1448A / Race 6)) protein is UPF0260 protein PSPPH_1551.